An 89-amino-acid polypeptide reads, in one-letter code: Small ribosomal subunit protein uS15 (89 aa).

Basic and acidic residues predominate over residues 1–11 (MSITAERKAEV). The disordered stretch occupies residues 1–25 (MSITAERKAEVIKTNARKSGDTGSP).

The protein belongs to the universal ribosomal protein uS15 family. As to quaternary structure, part of the 30S ribosomal subunit. Forms a bridge to the 50S subunit in the 70S ribosome, contacting the 23S rRNA.

One of the primary rRNA binding proteins, it binds directly to 16S rRNA where it helps nucleate assembly of the platform of the 30S subunit by binding and bridging several RNA helices of the 16S rRNA. Its function is as follows. Forms an intersubunit bridge (bridge B4) with the 23S rRNA of the 50S subunit in the ribosome. The chain is Small ribosomal subunit protein uS15 from Nitrobacter hamburgensis (strain DSM 10229 / NCIMB 13809 / X14).